Here is a 123-residue protein sequence, read N- to C-terminus: Probable cyclase otaY (123 aa).

Belongs to the aurE cyclase family.

It functions in the pathway mycotoxin biosynthesis. In terms of biological role, probable cyclase; part of the gene cluster that mediates the biosynthesis of ochratoxin A (OTA), a mycotoxin composed of a chlorinated type I polyketide dihydroisocoumarin moiety linked to L-phenylalanine, and demonstrated to have nephrotoxic, immunotoxic, genotoxic, neurotoxic, and teratogenic properties. OtaY is probably involved in the polyketide cyclization. The pathway begins with the highly reducing polyketide synthase otaA that catalyzes the formation of the isocoumarin group during the initial stages of biosynthesis, starting from one acetate and 4 malonate units, to originate the characteristic pentaketide skeleton 7-methylmellein (7-MM) of the OTA molecule. The newly identified cyclase otaY might be involved in the polyketide cyclization reaction during the initial steps of the OTA biosynthesis. 7-MM is then oxidized into 7-carboxymellein (also called ochratoxin beta) by the cytochrome P450 monooxygenase otaC. The NRPS encoded by the otaB gene is involved in the linking of phenylalanine to the dihydroisocoumarin ring. The reaction catalyzed by NRPS results in the production of ochratoxin B (OTB), which is the non-chlorinated analog of OTA and which subsequently serves as the substrate of the halogenase otaD for chlorination activity to form the final molecular structure of OTA, containing a chlorine atom in the C-5 position of the molecule. This chain is Probable cyclase otaY, found in Aspergillus carbonarius (strain ITEM 5010).